The chain runs to 701 residues: DNA ligase (701 aa).

Residues 1–21 form a disordered region; that stretch reads MSAKSTPDAGPQEQATEAEAE. NAD(+) contacts are provided by residues 50–54, 100–101, and Glu130; these read DADFD and SL. The N6-AMP-lysine intermediate role is filled by Lys132. NAD(+)-binding residues include Arg153, Glu193, Lys309, and Lys333. The Zn(2+) site is built by Cys427, Cys430, Cys446, and Cys452. The BRCT domain occupies 616 to 701; that stretch reads SIARTLEGLS…LENGPQAPEG (86 aa).

It belongs to the NAD-dependent DNA ligase family. LigA subfamily. Mg(2+) serves as cofactor. It depends on Mn(2+) as a cofactor.

It catalyses the reaction NAD(+) + (deoxyribonucleotide)n-3'-hydroxyl + 5'-phospho-(deoxyribonucleotide)m = (deoxyribonucleotide)n+m + AMP + beta-nicotinamide D-nucleotide.. DNA ligase that catalyzes the formation of phosphodiester linkages between 5'-phosphoryl and 3'-hydroxyl groups in double-stranded DNA using NAD as a coenzyme and as the energy source for the reaction. It is essential for DNA replication and repair of damaged DNA. This chain is DNA ligase, found in Mycobacterium sp. (strain KMS).